A 442-amino-acid polypeptide reads, in one-letter code: tRNA modification GTPase MnmE (442 aa).

(6S)-5-formyl-5,6,7,8-tetrahydrofolate contacts are provided by Arg22, Glu79, and Lys119. The 151-residue stretch at 216–366 folds into the TrmE-type G domain; it reads GIKTCLVGAP…LLEKIKSIFA (151 aa). Asn226 contributes to the K(+) binding site. GTP contacts are provided by residues 226–231, 245–251, and 270–273; these read NSGKSS, SEIPGTT, and DTAG. Position 230 (Ser230) interacts with Mg(2+). The K(+) site is built by Ser245, Ile247, and Thr250. Residue Thr251 coordinates Mg(2+). Residue Lys442 coordinates (6S)-5-formyl-5,6,7,8-tetrahydrofolate.

This sequence belongs to the TRAFAC class TrmE-Era-EngA-EngB-Septin-like GTPase superfamily. TrmE GTPase family. In terms of assembly, homodimer. Heterotetramer of two MnmE and two MnmG subunits. Requires K(+) as cofactor.

The protein localises to the cytoplasm. In terms of biological role, exhibits a very high intrinsic GTPase hydrolysis rate. Involved in the addition of a carboxymethylaminomethyl (cmnm) group at the wobble position (U34) of certain tRNAs, forming tRNA-cmnm(5)s(2)U34. This chain is tRNA modification GTPase MnmE, found in Mesomycoplasma hyopneumoniae (strain 7448) (Mycoplasma hyopneumoniae).